The chain runs to 453 residues: Allantoinase (453 aa).

Zn(2+) contacts are provided by histidine 59, histidine 61, lysine 146, histidine 186, histidine 242, and aspartate 315. At lysine 146 the chain carries N6-carboxylysine.

It belongs to the metallo-dependent hydrolases superfamily. Allantoinase family. In terms of assembly, homotetramer. Requires Zn(2+) as cofactor. In terms of processing, carboxylation allows a single lysine to coordinate two zinc ions.

It catalyses the reaction (S)-allantoin + H2O = allantoate + H(+). It functions in the pathway nitrogen metabolism; (S)-allantoin degradation; allantoate from (S)-allantoin: step 1/1. Its function is as follows. Catalyzes the conversion of allantoin (5-ureidohydantoin) to allantoic acid by hydrolytic cleavage of the five-member hydantoin ring. The sequence is that of Allantoinase from Escherichia coli (strain SMS-3-5 / SECEC).